The sequence spans 358 residues: Probable isocitrate dehydrogenase [NAD] subunit alpha, mitochondrial (358 aa).

4 residues coordinate substrate: arginine 108, arginine 118, arginine 139, and aspartate 226. Residues aspartate 226, aspartate 250, and aspartate 254 each contribute to the Mg(2+) site.

This sequence belongs to the isocitrate and isopropylmalate dehydrogenases family. As to quaternary structure, heterooligomer of subunits alpha, beta, and gamma in the apparent ratio of 2:1:1. Mg(2+) serves as cofactor. The cofactor is Mn(2+).

The protein resides in the mitochondrion. The enzyme catalyses D-threo-isocitrate + NAD(+) = 2-oxoglutarate + CO2 + NADH. In Caenorhabditis elegans, this protein is Probable isocitrate dehydrogenase [NAD] subunit alpha, mitochondrial (idha-1).